Reading from the N-terminus, the 435-residue chain is IAA-amino acid hydrolase ILR1-like 5 (435 aa).

An N-terminal signal peptide occupies residues methionine 1 to serine 25. Cysteine 134, histidine 136, glutamate 170, histidine 194, and histidine 397 together coordinate Mn(2+). The Prevents secretion from ER motif lies at lysine 432–leucine 435.

The protein belongs to the peptidase M20 family.

It is found in the endoplasmic reticulum lumen. Functionally, hydrolyzes certain amino acid conjugates of the plant growth regulator indole-3-acetic acid (IAA). This chain is IAA-amino acid hydrolase ILR1-like 5, found in Arabidopsis thaliana (Mouse-ear cress).